Reading from the N-terminus, the 268-residue chain is Undecaprenyl-diphosphatase (268 aa).

Helical transmembrane passes span 4-24 (STTLVALVLGLLEGLTEFIPV), 50-70 (IQLGAVLAVLTVYAAKLVSVI), 84-104 (VAVLVAFLPAVVIGVLAHGFI), 109-129 (FETPILIATMLILGGIVLLFV), 144-164 (LPLNVALKIGFIQCLAMVPGV), 185-205 (AEFSFFLSMPTMAGAFAFDLF), 214-234 (SALGEIAVGFVAAFVAAVLVV), and 247-267 (ALFGWWRIAVGSVALAALLAG).

Belongs to the UppP family.

It localises to the cell inner membrane. It carries out the reaction di-trans,octa-cis-undecaprenyl diphosphate + H2O = di-trans,octa-cis-undecaprenyl phosphate + phosphate + H(+). Its function is as follows. Catalyzes the dephosphorylation of undecaprenyl diphosphate (UPP). Confers resistance to bacitracin. The polypeptide is Undecaprenyl-diphosphatase (Cereibacter sphaeroides (strain ATCC 17029 / ATH 2.4.9) (Rhodobacter sphaeroides)).